Here is a 124-residue protein sequence, read N- to C-terminus: Small ribosomal subunit protein uS12 (124 aa).

A disordered region spans residues 1–28; sequence MPTIQQLIRSERSKAKKKTKSPALKQCP. A 3-methylthioaspartic acid modification is found at aspartate 89. Residues 101–124 form a disordered region; sequence TLDAQGVKDRKQGRSKYGTKKPKE. A compositionally biased stretch (basic residues) spans 113 to 124; that stretch reads GRSKYGTKKPKE.

This sequence belongs to the universal ribosomal protein uS12 family. As to quaternary structure, part of the 30S ribosomal subunit. Contacts proteins S8 and S17. May interact with IF1 in the 30S initiation complex.

With S4 and S5 plays an important role in translational accuracy. Its function is as follows. Interacts with and stabilizes bases of the 16S rRNA that are involved in tRNA selection in the A site and with the mRNA backbone. Located at the interface of the 30S and 50S subunits, it traverses the body of the 30S subunit contacting proteins on the other side and probably holding the rRNA structure together. The combined cluster of proteins S8, S12 and S17 appears to hold together the shoulder and platform of the 30S subunit. This chain is Small ribosomal subunit protein uS12, found in Crocosphaera subtropica (strain ATCC 51142 / BH68) (Cyanothece sp. (strain ATCC 51142)).